The primary structure comprises 421 residues: Alpha-tubulin N-acetyltransferase 1 (421 aa).

The N-acetyltransferase domain maps to 1–190; the sequence is MEFPFDVDAL…NNFVIFEGFF (190 aa). N6-acetyllysine; by autocatalysis is present on lysine 56. Residue 124–137 participates in acetyl-CoA binding; that stretch reads FYIHESVQRHGHGR. Position 146 is an N6-acetyllysine; by autocatalysis (lysine 146). 160-169 contributes to the acetyl-CoA binding site; it reads SPKLLKFLNK. A disordered region spans residues 214–235; that stretch reads PIPAAPARKLPPKRAEGDIKPY. A compositionally biased stretch (basic and acidic residues) spans 226 to 235; sequence KRAEGDIKPY. An N6-acetyllysine; by autocatalysis mark is found at lysine 233 and lysine 244. Residues 252-284 form a disordered region; sequence PLNRAPRRATPPAHPPPRSSSLGNSPDRGPLRP. 2 positions are modified to phosphoserine: serine 272 and serine 276. The residue at position 305 (arginine 305) is an Asymmetric dimethylarginine. Serine 315 carries the phosphoserine modification. Position 323 is an omega-N-methylarginine (arginine 323). The segment covering 342–351 has biased composition (polar residues); it reads FNTSFLGTGN. Positions 342 to 398 are disordered; sequence FNTSFLGTGNQERKQGEQEAEDRSASEDQVLLQDGSGEEPTHTVAPRAQAPPAQSWM. A compositionally biased stretch (basic and acidic residues) spans 352–367; it reads QERKQGEQEAEDRSAS.

It belongs to the acetyltransferase ATAT1 family. Component of the BBSome complex. Interacts with AP2 alpha-adaptins, including AP2A2, but not with AP1 gamma-adaptin (AP1G1/AP1G2); this interaction is required for efficient alpha-tubulin acetylation, hence clathrin-coated pits are sites of microtubule acetylation. Autoacetylation strongly increases tubulin acetylation.

Its subcellular location is the cytoplasm. The protein localises to the membrane. The protein resides in the clathrin-coated pit. It is found in the cell junction. It localises to the focal adhesion. Its subcellular location is the cell projection. The protein localises to the axon. The protein resides in the cytoskeleton. It is found in the spindle. It catalyses the reaction L-lysyl-[alpha-tubulin] + acetyl-CoA = N(6)-acetyl-L-lysyl-[alpha-tubulin] + CoA + H(+). Functionally, specifically acetylates 'Lys-40' in alpha-tubulin on the lumenal side of microtubules. Promotes microtubule destabilization and accelerates microtubule dynamics; this activity may be independent of acetylation activity. Acetylates alpha-tubulin with a slow enzymatic rate, due to a catalytic site that is not optimized for acetyl transfer. Enters the microtubule through each end and diffuses quickly throughout the lumen of microtubules. Acetylates only long/old microtubules because of its slow acetylation rate since it does not have time to act on dynamically unstable microtubules before the enzyme is released. Required for normal sperm flagellar function. Promotes directional cell locomotion and chemotaxis, through AP2A2-dependent acetylation of alpha-tubulin at clathrin-coated pits that are concentrated at the leading edge of migrating cells. May facilitate primary cilium assembly. This chain is Alpha-tubulin N-acetyltransferase 1, found in Rattus norvegicus (Rat).